The sequence spans 509 residues: MNEIKDTDSKKSEEYEDDFEKDLEWLINENEKSDASIIEMACEKEENINQDLKENETVIEHTKQHSDPDKSLQDDVSPRRNDIISVPGIQPLDPISDSDSENSFQESKLESQKDLEEEEDEEVRRYIMEKIVQANKLLQNQEPVNDKRERKLKFKDKLADLEVPPLEDTNTSKNYFENERNMFGKLSQLCISNDFGQENVLLSLTNASCEENKDRTILVERDGKFELLNLQDIASQGFLPPINNANSTENDPQHLLLRSSNSSVSGTKKEDSAAKIHAVTHSSTGEPLVYIPQPPLNRKTCPSSAANSDRSKGKGKYNHRTQSARISPVTSTYCLSPRQKELQKQLEQKREKLKREEEQRKIEEEKEKKRENDIVFKAWLQKKREQVLEMRRIQRAKEIEDMNSRQENRDPQQAFRLWLKKKHEEQMKERKTEELRKQEECLFFLKGTEGRERAFKQWLRRKRIEKIAEQQAVRERTRQLRLEAKHSKQLQHHLYMSEAKPFRFTDHYN.

The span at 60-82 (EHTKQHSDPDKSLQDDVSPRRND) shows a compositional bias: basic and acidic residues. 2 disordered regions span residues 60 to 121 (EHTK…EEDE) and 285 to 367 (GEPL…EEKE). Polar residues predominate over residues 320 to 334 (RTQSARISPVTSTYC). Residues 335 to 375 (LSPRQKELQKQLEQKREKLKREEEQRKIEEEKEKKRENDIV) are a coiled coil. Residues 338 to 367 (RQKELQKQLEQKREKLKREEEQRKIEEEKE) are compositionally biased toward basic and acidic residues.

The protein belongs to the CCDC181 family. Homodimer. Interacts with HOOK1. Interacts with HOOK2. Interacts with HOOK3.

Its subcellular location is the cytoplasm. The protein resides in the cytoskeleton. The protein localises to the cell projection. It localises to the cilium. It is found in the flagellum. Functionally, microtubule-binding protein that localizes to the microtubular manchette of elongating spermatids. This chain is Coiled-coil domain-containing protein 181, found in Macaca fascicularis (Crab-eating macaque).